Consider the following 362-residue polypeptide: Protein Tob1 (362 aa).

A Bipartite nuclear localization signal motif is present at residues 22–39 (RRRVNIFGEELERLLKKK). An important for nuclear localization region spans residues 82–92 (VRGNLPQDLSV). Positions 144-160 (DPASSVSSSPSPPFGHS) are enriched in low complexity. The segment at 144-171 (DPASSVSSSPSPPFGHSAAVSPTFMPRS) is disordered. The required for interaction with CPEB3 stretch occupies residues 161–220 (AAVSPTFMPRSTQPLTFTTATFAATKFGSTKMKNSGRSSKVARTSPINLGLTVNVNDLLK). T204 bears the Phosphothreonine mark. The short motif at 228 to 236 (VHSLYGLGL) is the Nuclear export signal element. The disordered stretch occupies residues 234–284 (LGLGSQQQPQPQPQQQQQQQPSSSQPPPPLPQQQQQQPQQQQQQQQQTSAL). Composition is skewed to low complexity over residues 238–256 (SQQQ…QPSS) and 265–280 (QQQQ…QQQQ).

The protein belongs to the BTG family. As to quaternary structure, interacts with ERBB2. Interacts with CNOT7. Interacts with CPEB3 (via C-terminal RNA-binding region); recruits CNOT7 to CPEB3 to form a ternary complex required for mRNA deadenylation and decay. Interacts with CNOT8. Interacts with CPEB4. Phosphorylated on Ser and Thr residues. Ubiquitous.

The protein localises to the cytoplasm. Its subcellular location is the nucleus. In terms of biological role, anti-proliferative protein; the function is mediated by association with deadenylase subunits of the CCR4-NOT complex. Mediates CPEB3-accelerated mRNA deadenylation by binding to CPEB3 and recruiting CNOT7 which leads to target mRNA deadenylation and decay. The protein is Protein Tob1 (Tob1) of Mus musculus (Mouse).